The primary structure comprises 366 residues: Phospho-N-acetylmuramoyl-pentapeptide-transferase (366 aa).

Transmembrane regions (helical) follow at residues 27–47 (AALFTSALIVFLFGPTIINSL), 71–91 (TPTMGGLMILAGIVGASLLWA), 93–113 (LSNVYVVATLLVTLGFGAIGF), 138–158 (FVIAGIAVYFMMRTALASGIA), 174–194 (FMINIGIMFVVFGGFVIVGAG), 205–225 (GLAIVPVMIAAASFGVIAYLA), 245–265 (LAVVLGAVIGAGLGFLWFNAP), 268–288 (AIFMGDTGSLALGGTIGTVAV), 294–314 (IVMAIIGGLFVIETLSVIIQV), and 343–363 (QVVIRFWIVAVGLAMLGLSTL).

This sequence belongs to the glycosyltransferase 4 family. MraY subfamily. The cofactor is Mg(2+).

It is found in the cell inner membrane. It carries out the reaction UDP-N-acetyl-alpha-D-muramoyl-L-alanyl-gamma-D-glutamyl-meso-2,6-diaminopimeloyl-D-alanyl-D-alanine + di-trans,octa-cis-undecaprenyl phosphate = di-trans,octa-cis-undecaprenyl diphospho-N-acetyl-alpha-D-muramoyl-L-alanyl-D-glutamyl-meso-2,6-diaminopimeloyl-D-alanyl-D-alanine + UMP. It functions in the pathway cell wall biogenesis; peptidoglycan biosynthesis. Functionally, catalyzes the initial step of the lipid cycle reactions in the biosynthesis of the cell wall peptidoglycan: transfers peptidoglycan precursor phospho-MurNAc-pentapeptide from UDP-MurNAc-pentapeptide onto the lipid carrier undecaprenyl phosphate, yielding undecaprenyl-pyrophosphoryl-MurNAc-pentapeptide, known as lipid I. The chain is Phospho-N-acetylmuramoyl-pentapeptide-transferase from Rhizobium johnstonii (strain DSM 114642 / LMG 32736 / 3841) (Rhizobium leguminosarum bv. viciae).